An 86-amino-acid polypeptide reads, in one-letter code: Probable weak neurotoxin NNAM3 (86 aa).

An N-terminal signal peptide occupies residues 1–21; sequence MKTLLLTLVVVTIVCLDLGYT. 5 disulfides stabilise this stretch: cysteine 24-cysteine 45, cysteine 27-cysteine 32, cysteine 38-cysteine 63, cysteine 67-cysteine 78, and cysteine 79-cysteine 84.

Belongs to the three-finger toxin family. Ancestral subfamily. Orphan group II sub-subfamily. As to expression, expressed by the venom gland.

It is found in the secreted. Functionally, binds with low affinity to muscular (alpha-1-beta-1-delta-epsilon/CHRNA1-CHRNB1-CHRND-CHRNE) and very low affinity to neuronal (alpha-7/CHRNA7) nicotinic acetylcholine receptor (nAChR). The protein is Probable weak neurotoxin NNAM3 of Naja atra (Chinese cobra).